The primary structure comprises 386 residues: MSFRKSNIYLNLLNSYMIDSPQPSSINYWWNLGSLLGLCLVIQICTGIFLAMHYSSNIELAFSAVEHIMRDVQGGWFIRYAHANGASFFFICMYIHIGKGLYYGSYRAPRTLVWNVGVIIFVLTMAAAFLGYCCVYGQMSHWGATVITNLFSAIPFIGNDIVSWLWGGFSVSNPTIQRFFAFHYLVPFIIAAFVIMHFMALHTHGSSNPLGVTGNLDRLPMHGYFIFKDLITVFVFLFFFSLFVFFSPNTMGHPDNYIPGNPLVTPASIVPEWYLLPFYAILRSVPDKLLGVLAMFGAILILLVLPITDRSVIRGNAFKVFSKFFFFLFIANFVLLGHLGECHVEPPFVVMGQIATVIYFAYFLVIVPVVSTIENVLFYVGRKNAK.

4 helical membrane-spanning segments follow: residues 32–52 (LGSL…FLAM), 76–98 (WFIR…IHIG), 113–133 (VWNV…LGYC), and 179–199 (FFAF…MHFM). Residues His82 and His96 each contribute to the heme b site. Heme b is bound by residues His183 and His197. Position 202 (His202) interacts with a ubiquinone. The next 4 helical transmembrane spans lie at 225-245 (FIFK…LFVF), 289-309 (LLGV…PITD), 321-341 (FSKF…HLGE), and 348-368 (FVVM…VIVP).

Belongs to the cytochrome b family. As to quaternary structure, fungal cytochrome b-c1 complex contains 10 subunits; 3 respiratory subunits, 2 core proteins and 5 low-molecular weight proteins. Cytochrome b-c1 complex is a homodimer. The cofactor is heme b.

Its subcellular location is the mitochondrion inner membrane. Its function is as follows. Component of the ubiquinol-cytochrome c reductase complex (complex III or cytochrome b-c1 complex) that is part of the mitochondrial respiratory chain. The b-c1 complex mediates electron transfer from ubiquinol to cytochrome c. Contributes to the generation of a proton gradient across the mitochondrial membrane that is then used for ATP synthesis. This chain is Cytochrome b (COB), found in Kluyveromyces lactis (strain ATCC 8585 / CBS 2359 / DSM 70799 / NBRC 1267 / NRRL Y-1140 / WM37) (Yeast).